Here is a 444-residue protein sequence, read N- to C-terminus: Exodeoxyribonuclease 7 large subunit (444 aa).

The protein belongs to the XseA family. In terms of assembly, heterooligomer composed of large and small subunits.

It is found in the cytoplasm. The catalysed reaction is Exonucleolytic cleavage in either 5'- to 3'- or 3'- to 5'-direction to yield nucleoside 5'-phosphates.. Its function is as follows. Bidirectionally degrades single-stranded DNA into large acid-insoluble oligonucleotides, which are then degraded further into small acid-soluble oligonucleotides. The chain is Exodeoxyribonuclease 7 large subunit from Rickettsia canadensis (strain McKiel).